The sequence spans 315 residues: Secreted frizzled-related protein 5 (315 aa).

The first 27 residues, 1–27 (MRAAAGGARAAVLALLLGALHGAPARG), serve as a signal peptide directing secretion. Residues 46-163 (SKPPQCLDIP…PLDNDLCIAV (118 aa)) enclose the FZ domain. Intrachain disulfides connect cysteine 51–cysteine 114, cysteine 61–cysteine 107, cysteine 98–cysteine 133, cysteine 122–cysteine 160, cysteine 126–cysteine 150, cysteine 179–cysteine 251, cysteine 182–cysteine 253, and cysteine 196–cysteine 301. The NTR domain occupies 179-301 (CAQCEMEHSA…AVKFMFSYPC (123 aa)).

Belongs to the secreted frizzled-related protein (sFRP) family. In terms of tissue distribution, strongly expressed in the retinal pigment epithelium (RPE). Weak expression in retina, brain, heart, liver, kidney, testis and muscle.

It is found in the secreted. Functionally, soluble frizzled-related proteins (sFRPS) function as modulators of Wnt signaling through direct interaction with Wnts. They have a role in regulating cell growth and differentiation in specific cell types. SFRP5 may be involved in determining the polarity of photoreceptor, and perhaps other, cells in the retina. Inhibits Wnt8 signaling, in vitro. The protein is Secreted frizzled-related protein 5 (SFRP5) of Bos taurus (Bovine).